Reading from the N-terminus, the 568-residue chain is Periplasmic trehalase (568 aa).

Positions 1–38 (MPHAPARSGDAMSAAAPPCCTSLLGLSLSMFVAPCALA) are cleaved as a signal peptide. Substrate contacts are provided by residues Arg-169, 176–177 (WD), Asn-213, 222–224 (RSQ), 294–296 (RPE), and Gly-327. Catalysis depends on proton donor/acceptor residues Asp-329 and Glu-511. Residue Glu-526 participates in substrate binding.

Belongs to the glycosyl hydrolase 37 family.

Its subcellular location is the periplasm. The enzyme catalyses alpha,alpha-trehalose + H2O = alpha-D-glucose + beta-D-glucose. Functionally, provides the cells with the ability to utilize trehalose at high osmolarity by splitting it into glucose molecules that can subsequently be taken up by the phosphotransferase-mediated uptake system. The polypeptide is Periplasmic trehalase (Xanthomonas campestris pv. campestris (strain B100)).